A 339-amino-acid chain; its full sequence is Serpentine receptor class delta-32 (339 aa).

7 consecutive transmembrane segments (helical) span residues 14 to 34 (AAVV…LIFF), 45 to 65 (VFLA…LLTV), 94 to 114 (IFTT…LSMV), 128 to 148 (SGAF…VVSI), 188 to 208 (LWVA…MFWC), 237 to 257 (ALTV…LIFL), and 269 to 289 (FGYI…LVTI).

The protein belongs to the nematode receptor-like protein srd family.

The protein resides in the membrane. This is Serpentine receptor class delta-32 (srd-32) from Caenorhabditis elegans.